Here is a 409-residue protein sequence, read N- to C-terminus: Glucose-1-phosphate adenylyltransferase (409 aa).

Alpha-D-glucose 1-phosphate is bound by residues glycine 168, 183–184 (EK), and serine 201.

This sequence belongs to the bacterial/plant glucose-1-phosphate adenylyltransferase family. Homotetramer.

It carries out the reaction alpha-D-glucose 1-phosphate + ATP + H(+) = ADP-alpha-D-glucose + diphosphate. The protein operates within glycan biosynthesis; glycogen biosynthesis. Its function is as follows. Involved in the biosynthesis of ADP-glucose, a building block required for the elongation reactions to produce glycogen. Catalyzes the reaction between ATP and alpha-D-glucose 1-phosphate (G1P) to produce pyrophosphate and ADP-Glc. This is Glucose-1-phosphate adenylyltransferase from Corynebacterium glutamicum (strain R).